The sequence spans 235 residues: Small ribosomal subunit protein uS3 (235 aa).

The KH type-2 domain occupies 39–107 (VRKFLNKELM…PAQINIAEVK (69 aa)).

Belongs to the universal ribosomal protein uS3 family. As to quaternary structure, part of the 30S ribosomal subunit. Forms a tight complex with proteins S10 and S14.

Its function is as follows. Binds the lower part of the 30S subunit head. Binds mRNA in the 70S ribosome, positioning it for translation. This chain is Small ribosomal subunit protein uS3, found in Actinobacillus succinogenes (strain ATCC 55618 / DSM 22257 / CCUG 43843 / 130Z).